Consider the following 786-residue polypeptide: E3 ubiquitin-protein ligase pub3 (786 aa).

Residues 1–109 (MEQGAKRVRF…RSNREVSLTR (109 aa)) enclose the C2 domain. 2 disordered regions span residues 134-225 (IRAP…NSNA) and 263-306 (TWTR…DSGN). Over residues 142 to 193 (SSTTANRTTSTPTTTTARTTRTTPRPTATTNTSNQSTSNSTRNGTSAATSNG) the composition is skewed to low complexity. Over residues 204-213 (HRSSPVTNRQ) the composition is skewed to polar residues. Over residues 214 to 225 (TNNTSALSNSNA) the composition is skewed to low complexity. The 34-residue stretch at 236–269 (GRLPPGWERRADSLGRTYYVDHNTRTTTWTRPAS) folds into the WW 1 domain. Polar residues-rich tracts occupy residues 263 to 285 (TWTR…QRLN) and 295 to 305 (SNPSLMQSDSG). WW domains lie at 306-339 (NDLP…DPRN) and 364-397 (GPLP…DPRL). The 334-residue stretch at 453-786 (SAHDLKKRLM…VENTVGFGNE (334 aa)) folds into the HECT domain. Residue cysteine 754 is the Glycyl thioester intermediate of the active site.

It carries out the reaction S-ubiquitinyl-[E2 ubiquitin-conjugating enzyme]-L-cysteine + [acceptor protein]-L-lysine = [E2 ubiquitin-conjugating enzyme]-L-cysteine + N(6)-ubiquitinyl-[acceptor protein]-L-lysine.. The protein operates within protein modification; protein ubiquitination. E3 ubiquitin-protein ligase which accepts ubiquitin from an E2 ubiquitin-conjugating enzyme in the form of a thioester and then directly transfers the ubiquitin to targeted substrates. This Schizosaccharomyces pombe (strain 972 / ATCC 24843) (Fission yeast) protein is E3 ubiquitin-protein ligase pub3 (pub3).